The chain runs to 245 residues: NAD(P)H-quinone oxidoreductase subunit K (245 aa).

Residues Cys-58, Cys-59, Cys-123, and Cys-154 each contribute to the [4Fe-4S] cluster site. Residues 210–245 (SDTRSAPPKELAEAIGMPIPPALLTEKAQKEEQTRG) are disordered. The segment covering 236-245 (KAQKEEQTRG) has biased composition (basic and acidic residues).

It belongs to the complex I 20 kDa subunit family. As to quaternary structure, NDH-1 can be composed of about 15 different subunits; different subcomplexes with different compositions have been identified which probably have different functions. [4Fe-4S] cluster is required as a cofactor.

It localises to the cellular thylakoid membrane. It carries out the reaction a plastoquinone + NADH + (n+1) H(+)(in) = a plastoquinol + NAD(+) + n H(+)(out). The catalysed reaction is a plastoquinone + NADPH + (n+1) H(+)(in) = a plastoquinol + NADP(+) + n H(+)(out). In terms of biological role, NDH-1 shuttles electrons from an unknown electron donor, via FMN and iron-sulfur (Fe-S) centers, to quinones in the respiratory and/or the photosynthetic chain. The immediate electron acceptor for the enzyme in this species is believed to be plastoquinone. Couples the redox reaction to proton translocation, and thus conserves the redox energy in a proton gradient. Cyanobacterial NDH-1 also plays a role in inorganic carbon-concentration. The protein is NAD(P)H-quinone oxidoreductase subunit K of Nostoc punctiforme (strain ATCC 29133 / PCC 73102).